The following is a 435-amino-acid chain: Actin-like protein 7A (435 aa).

Disordered regions lie at residues 1–20 and 29–65; these read MWAP…VGNQ and QTAS…ERPK. The required for interaction with TES stretch occupies residues 31–51; the sequence is ASLRDGPAKRAVWVRRRSSEP. The span at 47 to 65 shows a compositional bias: basic and acidic residues; the sequence is RSSEPQEPTESKAAKERPK.

Belongs to the actin family. Interacts (via N-terminus) with TES (via LIM domain 2). Heterodimer with TES; the heterodimer interacts with ENAH to form a heterotrimer. Interacts with ACTL9. Interacts with CYLC1; the interaction may be relevant for proper acrosome attachment to the nuclear envelope.

It is found in the cytoplasm. Its subcellular location is the cytoskeleton. The protein localises to the golgi apparatus. It localises to the nucleus. Functionally, essential for normal spermatogenesis and male fertility. Required for normal sperm head morphology, acroplaxome formation, acrosome attachment, and acrosome granule stability. May anchor and stabilize acrosomal adherence to the acroplaxome at least in part by facilitating the presence of F-actin in the subacrosomal space. May play an important role in formation and fusion of Golgi-derived vesicles during acrosome biogenesis. This Macaca fascicularis (Crab-eating macaque) protein is Actin-like protein 7A (ACTL7A).